The following is a 319-amino-acid chain: rRNA adenine N-6-methyltransferase (319 aa).

Residues 1-59 (MARAPRSPHPARSRETSRAHPPYGTRADRAPGRGRDRDRSPDSPGNTSSRDGGRSPDRA) form a disordered region. A compositionally biased stretch (basic and acidic residues) spans 26–41 (RADRAPGRGRDRDRSP). 6 residues coordinate S-adenosyl-L-methionine: N66, L68, G93, E114, D141, and N157.

It belongs to the class I-like SAM-binding methyltransferase superfamily. rRNA adenine N(6)-methyltransferase family.

The catalysed reaction is adenosine(2085) in 23S rRNA + 2 S-adenosyl-L-methionine = N(6)-dimethyladenosine(2085) in 23S rRNA + 2 S-adenosyl-L-homocysteine + 2 H(+). Its function is as follows. This protein produces a dimethylation of the adenine residue at position 2085 in 23S rRNA, resulting in reduced affinity between ribosomes and macrolide-lincosamide-streptogramin B antibiotics. This is rRNA adenine N-6-methyltransferase (ermSF) from Streptomyces fradiae (Streptomyces roseoflavus).